The primary structure comprises 464 residues: Serine--tRNA synthetase-like protein Slimp (464 aa).

Belongs to the class-II aminoacyl-tRNA synthetase family. Type-1 seryl-tRNA synthetase subfamily.

It localises to the mitochondrion. Its function is as follows. Essential protein which may play a role in mitochondrial morphogenesis and function. Has transfer RNA (tRNA)-binding activity and can bind tRNA(Ser) but does not have serine--tRNA ligase activity and does not bind ATP. This chain is Serine--tRNA synthetase-like protein Slimp, found in Drosophila melanogaster (Fruit fly).